A 609-amino-acid polypeptide reads, in one-letter code: Chloride channel CLIC-like protein 1 (609 aa).

Residues 1–25 (MKLSSSSSFGLCILVVFFCFVVIES) form the signal peptide. Transmembrane regions (helical) follow at residues 212-235 (VSLIVLIIVAIICTQLWSVVSWFV), 241-260 (FAVSFFISLIWNWFHLYMLA), and 358-380 (VTLQIPVLIIIILAILIFVYGSA). Residues 398–553 (EQPPPAVGQR…PSSIDVKTVG (156 aa)) are disordered. 2 stretches are compositionally biased toward basic and acidic residues: residues 454–474 (ENREEDRSMDIRQEFSTKRTP) and 507–537 (EEVKVEEKEKKESFSVDNKEQKETKSPDRSE). The segment covering 538-547 (PITSEPPSSI) has biased composition (low complexity).

The protein belongs to the chloride channel MCLC family. In terms of tissue distribution, expressed in the hindbrain, swim bladder and the eye at 1 day post fertilization (dpf) with increased expression at 3 dpf. At 3 dpf, most prominent expression in the retina, with strong expression in the ganglion cell layer, outer nuclear layer and the retinal pigmented epithelium.

Its subcellular location is the endoplasmic reticulum membrane. The protein localises to the golgi apparatus membrane. The protein resides in the nucleus membrane. Its function is as follows. Seems to act as a chloride ion channel. Plays a role in retina development. In Danio rerio (Zebrafish), this protein is Chloride channel CLIC-like protein 1.